We begin with the raw amino-acid sequence, 316 residues long: Ribose-phosphate pyrophosphokinase (316 aa).

ATP is bound by residues 40–42 and 99–100; these read DGE and RQ. Mg(2+) is bound by residues His133 and Asp174. Lys197 is an active-site residue. D-ribose 5-phosphate contacts are provided by residues Arg199, Asp223, and 227 to 231; that span reads DTAGT.

The protein belongs to the ribose-phosphate pyrophosphokinase family. Class I subfamily. As to quaternary structure, homohexamer. The cofactor is Mg(2+).

Its subcellular location is the cytoplasm. It catalyses the reaction D-ribose 5-phosphate + ATP = 5-phospho-alpha-D-ribose 1-diphosphate + AMP + H(+). It functions in the pathway metabolic intermediate biosynthesis; 5-phospho-alpha-D-ribose 1-diphosphate biosynthesis; 5-phospho-alpha-D-ribose 1-diphosphate from D-ribose 5-phosphate (route I): step 1/1. Functionally, involved in the biosynthesis of the central metabolite phospho-alpha-D-ribosyl-1-pyrophosphate (PRPP) via the transfer of pyrophosphoryl group from ATP to 1-hydroxyl of ribose-5-phosphate (Rib-5-P). In Fusobacterium nucleatum subsp. nucleatum (strain ATCC 25586 / DSM 15643 / BCRC 10681 / CIP 101130 / JCM 8532 / KCTC 2640 / LMG 13131 / VPI 4355), this protein is Ribose-phosphate pyrophosphokinase.